Here is a 130-residue protein sequence, read N- to C-terminus: Phosphoribosyl-AMP cyclohydrolase (130 aa).

Asp-77 lines the Mg(2+) pocket. Residue Cys-78 coordinates Zn(2+). The Mg(2+) site is built by Asp-79 and Asp-81. Zn(2+) contacts are provided by Cys-95 and Cys-102.

Belongs to the PRA-CH family. As to quaternary structure, homodimer. Requires Mg(2+) as cofactor. Zn(2+) serves as cofactor.

The protein localises to the cytoplasm. The catalysed reaction is 1-(5-phospho-beta-D-ribosyl)-5'-AMP + H2O = 1-(5-phospho-beta-D-ribosyl)-5-[(5-phospho-beta-D-ribosylamino)methylideneamino]imidazole-4-carboxamide. It participates in amino-acid biosynthesis; L-histidine biosynthesis; L-histidine from 5-phospho-alpha-D-ribose 1-diphosphate: step 3/9. In terms of biological role, catalyzes the hydrolysis of the adenine ring of phosphoribosyl-AMP. This is Phosphoribosyl-AMP cyclohydrolase from Pseudomonas putida (strain W619).